Consider the following 671-residue polypeptide: DNA ligase (671 aa).

Residues 32-36 (DAEYD), 81-82 (SL), and Glu-113 each bind NAD(+). The active-site N6-AMP-lysine intermediate is the Lys-115. 4 residues coordinate NAD(+): Arg-136, Glu-173, Lys-290, and Lys-314. Residues Cys-408, Cys-411, Cys-426, and Cys-432 each contribute to the Zn(2+) site. The BRCT domain occupies 593 to 671 (EIDSPFAGKT…EAEMIRLLGA (79 aa)).

Belongs to the NAD-dependent DNA ligase family. LigA subfamily. The cofactor is Mg(2+). Mn(2+) is required as a cofactor.

The enzyme catalyses NAD(+) + (deoxyribonucleotide)n-3'-hydroxyl + 5'-phospho-(deoxyribonucleotide)m = (deoxyribonucleotide)n+m + AMP + beta-nicotinamide D-nucleotide.. In terms of biological role, DNA ligase that catalyzes the formation of phosphodiester linkages between 5'-phosphoryl and 3'-hydroxyl groups in double-stranded DNA using NAD as a coenzyme and as the energy source for the reaction. It is essential for DNA replication and repair of damaged DNA. This Salmonella typhimurium (strain LT2 / SGSC1412 / ATCC 700720) protein is DNA ligase.